The sequence spans 256 residues: Imidazole glycerol phosphate synthase subunit HisF (256 aa).

Catalysis depends on residues Asp12 and Asp131.

The protein belongs to the HisA/HisF family. In terms of assembly, heterodimer of HisH and HisF.

The protein resides in the cytoplasm. It carries out the reaction 5-[(5-phospho-1-deoxy-D-ribulos-1-ylimino)methylamino]-1-(5-phospho-beta-D-ribosyl)imidazole-4-carboxamide + L-glutamine = D-erythro-1-(imidazol-4-yl)glycerol 3-phosphate + 5-amino-1-(5-phospho-beta-D-ribosyl)imidazole-4-carboxamide + L-glutamate + H(+). Its pathway is amino-acid biosynthesis; L-histidine biosynthesis; L-histidine from 5-phospho-alpha-D-ribose 1-diphosphate: step 5/9. Functionally, IGPS catalyzes the conversion of PRFAR and glutamine to IGP, AICAR and glutamate. The HisF subunit catalyzes the cyclization activity that produces IGP and AICAR from PRFAR using the ammonia provided by the HisH subunit. The polypeptide is Imidazole glycerol phosphate synthase subunit HisF (Stutzerimonas stutzeri (strain A1501) (Pseudomonas stutzeri)).